A 48-amino-acid polypeptide reads, in one-letter code: Large ribosomal subunit protein bL36c (48 aa).

This sequence belongs to the bacterial ribosomal protein bL36 family.

The protein resides in the plastid. It is found in the chloroplast. This is Large ribosomal subunit protein bL36c from Rhodomonas salina (Cryptomonas salina).